The following is a 144-amino-acid chain: L-fucose mutarotase (144 aa).

The active-site Proton donor is the His-22. Substrate is bound by residues Asp-30, Arg-109, and 131-133 (YGN).

Belongs to the RbsD / FucU family. FucU mutarotase subfamily. Homodecamer.

It localises to the cytoplasm. The enzyme catalyses alpha-L-fucose = beta-L-fucose. It participates in carbohydrate metabolism; L-fucose metabolism. Functionally, involved in the anomeric conversion of L-fucose. The polypeptide is L-fucose mutarotase (Histophilus somni (strain 2336) (Haemophilus somnus)).